We begin with the raw amino-acid sequence, 215 residues long: Protein-L-isoaspartate O-methyltransferase 1 (215 aa).

The active site involves Ser-61.

This sequence belongs to the methyltransferase superfamily. L-isoaspartyl/D-aspartyl protein methyltransferase family.

The protein localises to the cytoplasm. It catalyses the reaction [protein]-L-isoaspartate + S-adenosyl-L-methionine = [protein]-L-isoaspartate alpha-methyl ester + S-adenosyl-L-homocysteine. Functionally, catalyzes the methyl esterification of L-isoaspartyl residues in peptides and proteins that result from spontaneous decomposition of normal L-aspartyl and L-asparaginyl residues. It plays a role in the repair and/or degradation of damaged proteins. The polypeptide is Protein-L-isoaspartate O-methyltransferase 1 (Pelobacter propionicus (strain DSM 2379 / NBRC 103807 / OttBd1)).